Consider the following 328-residue polypeptide: Trans-O-hydroxybenzylidenepyruvate hydratase-aldolase (328 aa).

Belongs to the DapA family. As to quaternary structure, homotrimer.

It catalyses the reaction (3E)-4-(2-hydroxyphenyl)-2-oxobut-3-enoate + H2O = salicylaldehyde + pyruvate. The protein operates within aromatic compound metabolism; naphthalene degradation. With respect to regulation, inhibited bye p-chloromercuribenzoate and salicylaldehyde. Activated by salicylate. In terms of biological role, involved in the naphthalene and naphthalenesulfonate catabolic pathway. Catalyzes the transformation of trans-O-hydroxybenzylidenepyruvate (THBPA) to salicylaldehyde and pyruvate. The reaction is reversible. Can also use 2,4-dihydroxybenzalpyruvate (2,4-DHBP) and 2,6-dihydroxybenzalpyruvate (2,6-DHBP). The sequence is that of Trans-O-hydroxybenzylidenepyruvate hydratase-aldolase (nsaE) from Sphingobium xenophagum.